Here is a 665-residue protein sequence, read N- to C-terminus: DNA ligase (665 aa).

NAD(+) contacts are provided by residues 31–35, 80–81, and Glu-110; these read DQEFD and SL. Catalysis depends on Lys-112, which acts as the N6-AMP-lysine intermediate. Positions 133, 170, 285, and 309 each coordinate NAD(+). 4 residues coordinate Zn(2+): Cys-403, Cys-406, Cys-421, and Cys-427. A BRCT domain is found at 587–665; it reads EHTDKLAGKS…SEEEFLQMIE (79 aa).

This sequence belongs to the NAD-dependent DNA ligase family. LigA subfamily. It depends on Mg(2+) as a cofactor. The cofactor is Mn(2+).

The catalysed reaction is NAD(+) + (deoxyribonucleotide)n-3'-hydroxyl + 5'-phospho-(deoxyribonucleotide)m = (deoxyribonucleotide)n+m + AMP + beta-nicotinamide D-nucleotide.. In terms of biological role, DNA ligase that catalyzes the formation of phosphodiester linkages between 5'-phosphoryl and 3'-hydroxyl groups in double-stranded DNA using NAD as a coenzyme and as the energy source for the reaction. It is essential for DNA replication and repair of damaged DNA. In Phocaeicola vulgatus (strain ATCC 8482 / DSM 1447 / JCM 5826 / CCUG 4940 / NBRC 14291 / NCTC 11154) (Bacteroides vulgatus), this protein is DNA ligase.